The primary structure comprises 379 residues: Homoserine O-acetyltransferase (379 aa).

The region spanning 52–356 (NVVVVLHALT…VYGHDGFLVE (305 aa)) is the AB hydrolase-1 domain. Serine 157 (nucleophile) is an active-site residue. Arginine 227 contacts substrate. Catalysis depends on residues aspartate 320 and histidine 350. Aspartate 351 lines the substrate pocket.

This sequence belongs to the AB hydrolase superfamily. MetX family. Homodimer.

Its subcellular location is the cytoplasm. It catalyses the reaction L-homoserine + acetyl-CoA = O-acetyl-L-homoserine + CoA. It functions in the pathway amino-acid biosynthesis; L-methionine biosynthesis via de novo pathway; O-acetyl-L-homoserine from L-homoserine: step 1/1. Its function is as follows. Transfers an acetyl group from acetyl-CoA to L-homoserine, forming acetyl-L-homoserine. The sequence is that of Homoserine O-acetyltransferase from Mycobacterium bovis (strain ATCC BAA-935 / AF2122/97).